The chain runs to 232 residues: Putative membrane protein ORF8 (232 aa).

Positions 71-84 (GSSAASIPSAPTPD) are enriched in low complexity. The disordered stretch occupies residues 71 to 121 (GSSAASIPSAPTPDATRESPTGEPHRDRALSTETPTPEPSRDGGSTPEVLH). 2 helical membrane-spanning segments follow: residues 166–182 (VFARALAAAEIAIGSVA) and 195–211 (LVVTSLVFAGVALWVIV).

It is found in the membrane. The protein is Putative membrane protein ORF8 (ORF8) of Ictalurid herpesvirus 1 (strain Auburn) (IcHV-1).